We begin with the raw amino-acid sequence, 367 residues long: Bi-functional coumaroyl CoA and feruloyl CoA ortho-hydroxylase Diox4 (367 aa).

A Fe2OG dioxygenase domain is found at 207–317; it reads IREPMLVGSR…RISVPLFVNP (111 aa). Tyr223 contacts 2-oxoglutarate. Fe cation-binding residues include His238, Asp240, and His298. Arg308 and Ser310 together coordinate 2-oxoglutarate.

This sequence belongs to the iron/ascorbate-dependent oxidoreductase family. Requires L-ascorbate as cofactor. Fe(2+) is required as a cofactor.

It carries out the reaction (E)-4-coumaroyl-CoA + 2-oxoglutarate + O2 = (E)-2,4-dihydroxycinnamoyl-CoA + succinate + CO2. The catalysed reaction is (E)-feruloyl-CoA + 2-oxoglutarate + O2 = (E)-6-hydroxyferuloyl-CoA + succinate + CO2. Its pathway is phenylpropanoid metabolism. With respect to regulation, repressed by the competitive inhibitor psoralen, but not by umbelliferone, xanthotoxin, bergapten and isopimpinellin. Functionally, 2-oxoglutarate (OG)- and Fe(II)-dependent dioxygenase (2OGD) involved in scopoletin and umbelliferone biosynthesis. Converts feruloyl CoA into 6'-hydroxyferuloyl CoA, and p-coumaroyl CoA into 2,4-dihydroxycinnamoyl-CoA. Has no activity with cinnamic acid, caffeic acid, p-coumaric acid, ferulic acid, cinnamoyl-CoA and caffeoyl-CoA. This chain is Bi-functional coumaroyl CoA and feruloyl CoA ortho-hydroxylase Diox4, found in Ruta graveolens (Common rue).